A 107-amino-acid chain; its full sequence is Putative ankyrin repeat protein L14 (107 aa).

ANK repeat units follow at residues 19–48 (DNNYVVRPTSIKVYIEVVKYLVSQGANIRA), 49–78 (DNDCAVRFASRNGHLEVVKYLVSLGANIRA), and 80–107 (NDCAVRWASRNGHLDVVEYLVSLGAVLS).

The sequence is that of Putative ankyrin repeat protein L14 from Acanthamoeba polyphaga (Amoeba).